The sequence spans 273 residues: Dermonecrotic toxin LapSicTox-alphaIB1b3 (273 aa).

His5 is a catalytic residue. Glu25 and Asp27 together coordinate Mg(2+). The active-site Nucleophile is His41. Cystine bridges form between Cys45-Cys51 and Cys47-Cys190. Asp85 contacts Mg(2+). A glycan (N-linked (GlcNAc...) asparagine) is linked at Asn250.

This sequence belongs to the arthropod phospholipase D family. Class II subfamily. Requires Mg(2+) as cofactor. As to expression, expressed by the venom gland.

The protein localises to the secreted. The catalysed reaction is an N-(acyl)-sphingosylphosphocholine = an N-(acyl)-sphingosyl-1,3-cyclic phosphate + choline. It catalyses the reaction an N-(acyl)-sphingosylphosphoethanolamine = an N-(acyl)-sphingosyl-1,3-cyclic phosphate + ethanolamine. The enzyme catalyses a 1-acyl-sn-glycero-3-phosphocholine = a 1-acyl-sn-glycero-2,3-cyclic phosphate + choline. It carries out the reaction a 1-acyl-sn-glycero-3-phosphoethanolamine = a 1-acyl-sn-glycero-2,3-cyclic phosphate + ethanolamine. In terms of biological role, dermonecrotic toxins cleave the phosphodiester linkage between the phosphate and headgroup of certain phospholipids (sphingolipid and lysolipid substrates), forming an alcohol (often choline) and a cyclic phosphate. This toxin acts on sphingomyelin (SM). It may also act on ceramide phosphoethanolamine (CPE), lysophosphatidylcholine (LPC) and lysophosphatidylethanolamine (LPE), but not on lysophosphatidylserine (LPS), and lysophosphatidylglycerol (LPG). It acts by transphosphatidylation, releasing exclusively cyclic phosphate products as second products. Induces dermonecrosis, hemolysis, increased vascular permeability, edema, inflammatory response, and platelet aggregation. This is Dermonecrotic toxin LapSicTox-alphaIB1b3 from Loxosceles apachea (Apache recluse spider).